A 365-amino-acid chain; its full sequence is MDLVLEVADHYVLDDLYAKVLPASLAANIPVKWQKLLGLNSGFSNSTILQETLNSKNAVKECRRFYGQVPFLFDMSTTSFASLLPRSSILREFLSLWVIVTIFGLLLYLFTASLSYVFVFDKSIFNHPRYLKNQMAMEIKLAVSAIPWMSMLTVPWFVMELNGHSKLYMKIDYENHGVRKLIIEYFTFIFFTDCGVYLAHRWLHWPRVYRALHKPHHKWLVCTPFASHSFHPVDGFLQSISYHIYPLILPLHKVSYLILFTFVNFWTVMIHDGQYLSNNPAVNGTACHTVHHLYFNYNYGQFTTLWDRLGGSYRRPDDSLFDPKLRDAKETWDAQVKEVEHFIKEVEGDDNDRIYENDPNTKKNN.

Topologically, residues 1–92 are cytoplasmic; sequence MDLVLEVADH…LLPRSSILRE (92 aa). The helical transmembrane segment at 93–113 threads the bilayer; it reads FLSLWVIVTIFGLLLYLFTAS. Residues 114–140 are Lumenal-facing; that stretch reads LSYVFVFDKSIFNHPRYLKNQMAMEIK. The helical transmembrane segment at 141-161 threads the bilayer; sequence LAVSAIPWMSMLTVPWFVMEL. Over 162 to 242 the chain is Cytoplasmic; sequence NGHSKLYMKI…VDGFLQSISY (81 aa). A Fatty acid hydroxylase domain is found at 187-311; it reads TFIFFTDCGV…FTTLWDRLGG (125 aa). The Histidine box-1 signature appears at 200 to 204; sequence HRWLH. A Histidine box-2 motif is present at residues 213–217; sequence HKPHH. Residues 243 to 263 traverse the membrane as a helical segment; that stretch reads HIYPLILPLHKVSYLILFTFV. Topologically, residues 264–365 are lumenal; that stretch reads NFWTVMIHDG…ENDPNTKKNN (102 aa). The Histidine box-3 signature appears at 288-292; sequence HTVHH. Residues Lys-324 and Lys-344 each participate in a glycyl lysine isopeptide (Lys-Gly) (interchain with G-Cter in ubiquitin) cross-link.

This sequence belongs to the sterol desaturase family. As to quaternary structure, interacts with ERG28. Requires Fe cation as cofactor.

The protein localises to the endoplasmic reticulum membrane. It catalyses the reaction episterol + 2 Fe(II)-[cytochrome b5] + O2 + 2 H(+) = 5-dehydroepisterol + 2 Fe(III)-[cytochrome b5] + 2 H2O. It functions in the pathway steroid metabolism; ergosterol biosynthesis; ergosterol from zymosterol: step 3/5. In terms of biological role, C-5 sterol desaturase; part of the third module of ergosterol biosynthesis pathway that includes the late steps of the pathway. ERG3 catalyzes the introduction of a C-5 double bond in the B ring to produce 5-dehydroepisterol. The third module or late pathway involves the ergosterol synthesis itself through consecutive reactions that mainly occur in the endoplasmic reticulum (ER) membrane. Firstly, the squalene synthase ERG9 catalyzes the condensation of 2 farnesyl pyrophosphate moieties to form squalene, which is the precursor of all steroids. Squalene synthase is crucial for balancing the incorporation of farnesyl diphosphate (FPP) into sterol and nonsterol isoprene synthesis. Secondly, the squalene epoxidase ERG1 catalyzes the stereospecific oxidation of squalene to (S)-2,3-epoxysqualene, which is considered to be a rate-limiting enzyme in steroid biosynthesis. Then, the lanosterol synthase ERG7 catalyzes the cyclization of (S)-2,3 oxidosqualene to lanosterol, a reaction that forms the sterol core. In the next steps, lanosterol is transformed to zymosterol through a complex process involving various demethylation, reduction and desaturation reactions. The lanosterol 14-alpha-demethylase ERG11 (also known as CYP51) catalyzes C14-demethylation of lanosterol to produce 4,4'-dimethyl cholesta-8,14,24-triene-3-beta-ol, which is critical for ergosterol biosynthesis. The C-14 reductase ERG24 reduces the C14=C15 double bond of 4,4-dimethyl-cholesta-8,14,24-trienol to produce 4,4-dimethyl-cholesta-8,24-dienol. 4,4-dimethyl-cholesta-8,24-dienol is substrate of the C-4 demethylation complex ERG25-ERG26-ERG27 in which ERG25 catalyzes the three-step monooxygenation required for the demethylation of 4,4-dimethyl and 4alpha-methylsterols, ERG26 catalyzes the oxidative decarboxylation that results in a reduction of the 3-beta-hydroxy group at the C-3 carbon to an oxo group, and ERG27 is responsible for the reduction of the keto group on the C-3. ERG28 has a role as a scaffold to help anchor ERG25, ERG26 and ERG27 to the endoplasmic reticulum and ERG29 regulates the activity of the iron-containing C4-methylsterol oxidase ERG25. Then, the sterol 24-C-methyltransferase ERG6 catalyzes the methyl transfer from S-adenosyl-methionine to the C-24 of zymosterol to form fecosterol. The C-8 sterol isomerase ERG2 catalyzes the reaction which results in unsaturation at C-7 in the B ring of sterols and thus converts fecosterol to episterol. The sterol-C5-desaturase ERG3 then catalyzes the introduction of a C-5 double bond in the B ring to produce 5-dehydroepisterol. The C-22 sterol desaturase ERG5 further converts 5-dehydroepisterol into ergosta-5,7,22,24(28)-tetraen-3beta-ol by forming the C-22(23) double bond in the sterol side chain. Finally, ergosta-5,7,22,24(28)-tetraen-3beta-ol is substrate of the C-24(28) sterol reductase ERG4 to produce ergosterol. In Saccharomyces cerevisiae (strain ATCC 204508 / S288c) (Baker's yeast), this protein is Delta(7)-sterol 5(6)-desaturase ERG3.